Reading from the N-terminus, the 109-residue chain is Probable WRKY transcription factor 43 (109 aa).

The segment at residues Ser-24 to Glu-89 is a DNA-binding region (WRKY).

Belongs to the WRKY group II-c family.

The protein resides in the nucleus. Transcription factor. Interacts specifically with the W box (5'-(T)TGAC[CT]-3'), a frequently occurring elicitor-responsive cis-acting element. This chain is Probable WRKY transcription factor 43 (WRKY43), found in Arabidopsis thaliana (Mouse-ear cress).